A 502-amino-acid polypeptide reads, in one-letter code: Lysine--tRNA ligase (502 aa).

Glutamate 411 and glutamate 418 together coordinate Mg(2+).

Belongs to the class-II aminoacyl-tRNA synthetase family. In terms of assembly, homodimer. Mg(2+) serves as cofactor.

It is found in the cytoplasm. The catalysed reaction is tRNA(Lys) + L-lysine + ATP = L-lysyl-tRNA(Lys) + AMP + diphosphate. The sequence is that of Lysine--tRNA ligase from Clostridium kluyveri (strain ATCC 8527 / DSM 555 / NBRC 12016 / NCIMB 10680 / K1).